The primary structure comprises 65 residues: Small, acid-soluble spore protein 2 (65 aa).

This sequence belongs to the alpha/beta-type SASP family.

In terms of biological role, SASP are bound to spore DNA. They are double-stranded DNA-binding proteins that cause DNA to change to an a-like conformation. They protect the DNA backbone from chemical and enzymatic cleavage and are thus involved in dormant spore's high resistance to UV light. This is Small, acid-soluble spore protein 2 (sasP-2) from Bacillus cereus.